Reading from the N-terminus, the 621-residue chain is Phosphomethylpyrimidine synthase (621 aa).

Residues Met-1–Pro-23 are compositionally biased toward low complexity. A disordered region spans residues Met-1–Tyr-29. Substrate-binding positions include Asn-215, Met-244, Tyr-273, His-309, Ser-329–Gly-331, Asp-370–Arg-373, and Glu-409. His-413 is a Zn(2+) binding site. Tyr-436 is a substrate binding site. His-477 contributes to the Zn(2+) binding site. Positions 557, 560, and 565 each coordinate [4Fe-4S] cluster.

It belongs to the ThiC family. As to quaternary structure, homodimer. It depends on [4Fe-4S] cluster as a cofactor.

The catalysed reaction is 5-amino-1-(5-phospho-beta-D-ribosyl)imidazole + S-adenosyl-L-methionine = 4-amino-2-methyl-5-(phosphooxymethyl)pyrimidine + CO + 5'-deoxyadenosine + formate + L-methionine + 3 H(+). It participates in cofactor biosynthesis; thiamine diphosphate biosynthesis. In terms of biological role, catalyzes the synthesis of the hydroxymethylpyrimidine phosphate (HMP-P) moiety of thiamine from aminoimidazole ribotide (AIR) in a radical S-adenosyl-L-methionine (SAM)-dependent reaction. The polypeptide is Phosphomethylpyrimidine synthase (Rhodospirillum rubrum (strain ATCC 11170 / ATH 1.1.1 / DSM 467 / LMG 4362 / NCIMB 8255 / S1)).